A 369-amino-acid chain; its full sequence is Endoglucanase (369 aa).

An N-terminal signal peptide occupies residues 1–22 (MMTMLRGWITMIVMLTAINAQA). The active-site Proton donor is Glu56. Asp117 acts as the Nucleophile in catalysis.

It belongs to the glycosyl hydrolase 8 (cellulase D) family.

It localises to the secreted. The enzyme catalyses Endohydrolysis of (1-&gt;4)-beta-D-glucosidic linkages in cellulose, lichenin and cereal beta-D-glucans.. It functions in the pathway glycan metabolism; bacterial cellulose biosynthesis. Its function is as follows. Hydrolyzes carboxymethylcellulose. This Salmonella typhi protein is Endoglucanase (bcsZ).